The primary structure comprises 528 residues: MFGIRSGNNNGGFTNLTSQAPQTTQMFQSQSQLQPQPQPQPQQQQQHLQFNGSSDASSLRFGNSLSNTVNANNYSSNIGNNSINNNNIKNGTNNISQHGQGNNPSWVNNPKKRFTPHTVIRRKTTKQNSSSDINQNDDSSSMNATMRNFSKQNQDSKHNERNKSAANNDINSLLSNFNDIPPSVTLQDWQREDEFGSIPSLTTQFVTDKYTAKKTNRSAYDSKNTPNVFDKDSYVRIANIEQNHLDNNYNTAETNNKVHETSSKSSSLSAIIVFGYPESISNELIEHFSHFGHIMEDFQVLRLGRGINPNTFRIFHNHDTGCDENDSTVNKSITLKGRNNESNNKKYPIFTGESWVKLTYNSPSSALRALQENGTIFRGSLIGCIPYSKNAVEQLAGCKIDNVDDIGEFNVSMYQNSSTSSTSNTPSPPNVIITDGTLLREDDNTPAGHAGNPTNISSPIVANSPNKRLDVIDGKLPFMQNAGPNSNIPNLLRNLESKMRQQEAKYRNNEPAGFTHKLSNWLFGWNDL.

The FG 1 repeat unit spans residues 2–3 (FG). The span at 23 to 50 (TTQMFQSQSQLQPQPQPQPQQQQQHLQF) shows a compositional bias: low complexity. Disordered stretches follow at residues 23-64 (TTQM…FGNS) and 88-144 (IKNG…SMNA). Polar residues-rich tracts occupy residues 51-64 (NGSS…FGNS) and 97-108 (QHGQGNNPSWVN). The FG 2 repeat unit spans residues 61-62 (FG). The span at 110–125 (PKKRFTPHTVIRRKTT) shows a compositional bias: basic residues. Residues 127-141 (QNSSSDINQNDDSSS) are compositionally biased toward low complexity. 3 FG repeats span residues 195-196 (FG), 274-275 (FG), and 291-292 (FG). The RRM Nup35-type domain occupies 265 to 394 (SSSLSAIIVF…IPYSKNAVEQ (130 aa)). Ser-458 and Ser-464 each carry phosphoserine. A coiled-coil region spans residues 490–510 (NLLRNLESKMRQQEAKYRNNE). The stretch at 523–524 (FG) is one FG 6 repeat.

In terms of assembly, component of the nuclear pore complex (NPC). NPC constitutes the exclusive means of nucleocytoplasmic transport. NPCs allow the passive diffusion of ions and small molecules and the active, nuclear transport receptor-mediated bidirectional transport of macromolecules such as proteins, RNAs, ribonucleoparticles (RNPs), and ribosomal subunits across the nuclear envelope. Due to its 8-fold rotational symmetry, all subunits are present with 8 copies or multiples thereof. ASM4 may form a subcomplex with NUP53, NDC1, and NUP170. Post-translationally, phosphorylated by CDC28.

Its subcellular location is the nucleus. It is found in the nuclear pore complex. The protein resides in the nucleus membrane. Functionally, functions as a component of the nuclear pore complex (NPC). NPC components, collectively referred to as nucleoporins (NUPs), can play the role of both NPC structural components and of docking or interaction partners for transiently associated nuclear transport factors. Active directional transport is assured by both, a Phe-Gly (FG) repeat affinity gradient for these transport factors across the NPC and a transport cofactor concentration gradient across the nuclear envelope (GSP1 and GSP2 GTPases associated predominantly with GTP in the nucleus, with GDP in the cytoplasm). May have a mitosis control function. The sequence is that of Nucleoporin ASM4 (ASM4) from Saccharomyces cerevisiae (strain ATCC 204508 / S288c) (Baker's yeast).